A 299-amino-acid chain; its full sequence is Bifunctional phosphoglucose/phosphomannose isomerase (299 aa).

An SIS domain is found at 27–177; it reads DEVEITPSSR…IHKLMEDFQK (151 aa). Glycine 44, serine 45, serine 84, serine 86, threonine 89, and arginine 132 together coordinate D-fructose 6-phosphate. Catalysis depends on glutamate 200, which acts as the Proton acceptor. D-fructose 6-phosphate-binding residues include histidine 216 and lysine 295. Histidine 216 (proton donor) is an active-site residue. Lysine 295 serves as the catalytic Proton acceptor.

Belongs to the PGI/PMI family. As to quaternary structure, homodimer.

The catalysed reaction is alpha-D-glucose 6-phosphate = beta-D-fructose 6-phosphate. The enzyme catalyses D-mannose 6-phosphate = D-fructose 6-phosphate. Presence or absence of metal ions or EDTA does not significantly affect the phosphoglucose isomerase activity. Its function is as follows. Dual specificity isomerase that catalyzes the isomerization of both glucose-6-phosphate and mannose-6-phosphate to fructose-6-phosphate with nearly similar catalytic efficiency. Also catalyzes the epimerization of mannose 6-phosphate to glucose 6-phosphate but the rate of epimerization reaction is 20-fold lower than that of isomerization reaction. The protein is Bifunctional phosphoglucose/phosphomannose isomerase of Pyrobaculum calidifontis (strain DSM 21063 / JCM 11548 / VA1).